The chain runs to 1045 residues: Cation efflux system protein CusA (1045 aa).

12 helical membrane-spanning segments follow: residues 14-34 (FLVLMGALFLSIWGTWTIINT), 336-356 (LSGKLLEEFIVVAVVCALFLW), 361-381 (ALVAIISLPLGLCIAFIVMHF), 388-408 (IMSLGGIAIAVGAMVDAAIVM), 444-464 (VGPALFISLLIITLSFIPIFT), 483-503 (AMAGAALLAIVVIPILMGYWI), 530-550 (VLHWPKTTLLVAALSVLTVLW), 869-889 (KLKLMVPMTLMIIFVLLYLAF), 896-916 (LLIISSVPFALVGGIWLLWWM), 926-946 (TGFIALAGVAAEFGVVMLMYL), 983-1003 (AMTVAVIIAGLLPILWGTGAG), and 1010-1030 (IAAPMIGGMITAPLLSLFIIP).

It belongs to the resistance-nodulation-cell division (RND) (TC 2.A.6) family. The cus efflux system is composed of CusA, CusB, CusC and CusF.

The protein resides in the cell inner membrane. In terms of biological role, part of a cation efflux system that mediates resistance to copper and silver. The polypeptide is Cation efflux system protein CusA (cusA) (Escherichia coli O157:H7).